Here is a 322-residue protein sequence, read N- to C-terminus: ATP-dependent 6-phosphofructokinase (322 aa).

Residues G12, 73-74 (RF), and 103-106 (GDGT) contribute to the ATP site. A Mg(2+)-binding site is contributed by D104. 126-128 (TID) lines the substrate pocket. D128 functions as the Proton acceptor in the catalytic mechanism. R155 contacts ADP. Substrate is bound by residues R163 and 170–172 (MGR). ADP-binding positions include 186–188 (GSE), K212, and 214–216 (KPS). Substrate-binding positions include E223, R245, and 251–254 (HTQR).

This sequence belongs to the phosphofructokinase type A (PFKA) family. ATP-dependent PFK group I subfamily. Prokaryotic clade 'B1' sub-subfamily. In terms of assembly, homotetramer. The cofactor is Mg(2+).

It localises to the cytoplasm. It catalyses the reaction beta-D-fructose 6-phosphate + ATP = beta-D-fructose 1,6-bisphosphate + ADP + H(+). Its pathway is carbohydrate degradation; glycolysis; D-glyceraldehyde 3-phosphate and glycerone phosphate from D-glucose: step 3/4. Allosterically activated by ADP and other diphosphonucleosides, and allosterically inhibited by phosphoenolpyruvate. Catalyzes the phosphorylation of D-fructose 6-phosphate to fructose 1,6-bisphosphate by ATP, the first committing step of glycolysis. This Mesomycoplasma hyopneumoniae (strain 7448) (Mycoplasma hyopneumoniae) protein is ATP-dependent 6-phosphofructokinase.